Reading from the N-terminus, the 264-residue chain is Undecaprenyl-diphosphatase (264 aa).

A run of 7 helical transmembrane segments spans residues 34–54 (LLNL…MGSI), 75–95 (LLYL…LYII), 104–124 (YDPS…GLYI), 137–157 (LSLK…LPGV), 180–200 (YSYL…ILFS), 207–227 (VISL…FIIG), and 243–263 (IYII…LTIL).

It belongs to the UppP family.

The protein resides in the cell membrane. The catalysed reaction is di-trans,octa-cis-undecaprenyl diphosphate + H2O = di-trans,octa-cis-undecaprenyl phosphate + phosphate + H(+). Its function is as follows. Catalyzes the dephosphorylation of undecaprenyl diphosphate (UPP). This chain is Undecaprenyl-diphosphatase, found in Sulfurisphaera tokodaii (strain DSM 16993 / JCM 10545 / NBRC 100140 / 7) (Sulfolobus tokodaii).